The primary structure comprises 426 residues: AP-1 complex subunit mu-1 (426 aa).

Positions 167–425 (KNEVFLDVIE…TQNGTEYSIR (259 aa)) constitute an MHD domain.

Belongs to the adaptor complexes medium subunit family. In terms of assembly, adaptor protein complex 1 (AP-1) is a heterotetramer composed of two large adaptins (gamma-type subunit apl4 and beta-type subunit apl2), a medium adaptin (mu-type subunit apm1) and a small adaptin (sigma-type subunit aps1). AP-1 interacts with clathrin. Interacts with sad1.

Its subcellular location is the cytoplasmic vesicle. It is found in the clathrin-coated vesicle membrane. The protein localises to the membrane. It localises to the clathrin-coated pit. Component of the adaptor complexes which link clathrin to receptors in coated vesicles. Clathrin-associated protein complexes are believed to interact with the cytoplasmic tails of membrane proteins, leading to their selection and concentration. The protein is AP-1 complex subunit mu-1 (apm1) of Schizosaccharomyces pombe (strain 972 / ATCC 24843) (Fission yeast).